Consider the following 238-residue polypeptide: MAVVTLSEMMEAGAHFGHQTRRWNPKMSRYIYCARNGVHIIDLVKTAVCMNNAYKWTRNAAKSGKRFLFVGTKKQASEVVAQEAARCGASYVNQRWLGGMLTNWTTMKARIDRLKDLERMESSGAIAMRPKKEASVLRHELERLQKYLGGLKGMKRLPDVVVLVDQRRETNAVLEARKLDIPLVSMLDTNCDPDLCEVPIPCNDDAVRSVQLVLGRIADAINEGRHGSNDQRARQKYS.

The protein belongs to the universal ribosomal protein uS2 family.

The sequence is that of Small ribosomal subunit protein uS2 from Prochlorococcus marinus (strain SARG / CCMP1375 / SS120).